Here is a 147-residue protein sequence, read N- to C-terminus: ATP synthase epsilon chain 2 (147 aa).

It belongs to the ATPase epsilon chain family. F-type ATPases have 2 components, CF(1) - the catalytic core - and CF(0) - the membrane proton channel. CF(1) has five subunits: alpha(3), beta(3), gamma(1), delta(1), epsilon(1). CF(0) has three main subunits: a, b and c.

The protein resides in the cell inner membrane. Its function is as follows. Produces ATP from ADP in the presence of a proton gradient across the membrane. The chain is ATP synthase epsilon chain 2 from Photobacterium profundum (strain SS9).